Consider the following 706-residue polypeptide: MILMITAPVCPPHLLLRHSSLLRHESSIGNFHRKKNPRFRTVSCSSLLPQPSVRPDKASELKTLWKKFYKVASPYWFSEDKDQARLRLAAVFALTLATTGISVGFNFLGRDFYNSLANKDQEQFTKQLFYYLCAFAGGIPFFVLRDYTKETLSLRWRSWMTKYYLQRYLKDQTFYKIQSQSIIDNPDQRLVDDLSSFTGTALSFSLTLVNATIDLISFSNILFTIYPPLFLVLLLYSFGGTAISVFLGKGLVNLNFLQEKKEADFRYSLVRVRENAESIAFYGGEQNEMQLLLQRFRSAFDNLTELLIASRNLEFFTDGYRYLIQILPVAVVAPMYFSGKIEFGVINQSVSAFNHILGDFSLVVYQFQAISSFSAVIDRLGEFDDLLDNNIFRDPSDTVDEIELTYQSEMNSSLLDTNGSIKSQPNQKRLEIEELTLQTPTNGTTLVHNLSADVYDKDHLLIMGPSGSGKTSLLRAMAGLWRSGKGKITFYLDPEVDFTQEKSDTQENSGKRGDVLFLPQRPYMVLGSLRQQLLYPTWSATVEETTPGGSNIDGSPPLLIREDGNEKPTTDDLMRTLEKVCLGHIADRFGGLDSIHEWSSVLSLGEQQRLAFARLLLSQPKLALLDESTSALDEANEAFLYQQIQSAGITYISIGHRRTLTKFHNKILQISTADPKSNERNWRIEDVDAQDSLYGRLNQKEVPSES.

Residues M1–C44 constitute a chloroplast transit peptide. S45 is modified (N-acetylserine). Helical transmembrane passes span L88–L108, F124–L144, T200–L222, S237–L257, and I326–I346. The 285-residue stretch at L88 to S372 folds into the ABC transmembrane type-1 domain. The ABC transporter domain occupies L430–L697. G464–T471 serves as a coordination point for ATP. The tract at residues T545–T569 is disordered. Residues I560 to T569 are compositionally biased toward basic and acidic residues.

This sequence belongs to the ABC transporter superfamily. ABCD family. Peroxisomal fatty acyl CoA transporter (TC 3.A.1.203) subfamily. In terms of assembly, homodimer or heterodimer.

The protein resides in the membrane. Its subcellular location is the plastid. It localises to the chloroplast. The sequence is that of ABC transporter D family member 2, chloroplastic (ABCC2) from Arabidopsis thaliana (Mouse-ear cress).